A 496-amino-acid chain; its full sequence is MKKYKFLFAISIIAIGLMTVLLASINEKKEEKENLLSVPKIEKWETKNEEFRKFYPREFDSWKQTKNSDQIDDMLKLHPEMVVLWAGYAFSKDYNAPRGHFYAIDDVSNSLRTGAPTDKESGPLPSACWTCKSPDVPRIMHEQGNNEYFTGKWAKYGADIVNPIGCVDCHNPETMELQVGRSYLNDALKAEGKSPTLATATQQDMRTLVCAQCHVEYYFKKTPLENGKTAMAVTLPWANGTTVEDMEKYYDTIEFSDWVHQVSKTPMIKAQHPEYETWKTGAHGRNNVSCADCHMPYTQEGGIKYTDHKIGNPLENMDKTCMNCHRVSEKSLLANIQDKKARKDDLNQKAMEQIVAAHLEAGKAWEVGATPEEMKDILTDIRHAQWRWDFAAASHSAFFHAPEETLKTLGTAIEKAGNARIKLAKVLAKHGVTDYKAPTITDKKQAQELIGLPMGKLIEEKKQFTNGLLKDWKNEAEQKGLYNPKSREGVETKTSY.

The N-terminal stretch at 1–23 (MKKYKFLFAISIIAIGLMTVLLA) is a signal peptide. Residue His100 coordinates heme c. Positions 128, 131, and 132 each coordinate heme. Positions 166, 169, 170, 210, 213, and 214 each coordinate heme c. Ca(2+) contacts are provided by Glu216, Tyr217, Lys269, and Gln271. Residue Tyr217 participates in substrate binding. His272 provides a ligand contact to substrate. His283, Cys290, Cys293, His294, His308, Cys321, Cys324, His325, and His400 together coordinate heme c.

This sequence belongs to the cytochrome c-552 family. Ca(2+) is required as a cofactor. It depends on heme c as a cofactor.

Its subcellular location is the periplasm. It carries out the reaction 6 Fe(III)-[cytochrome c] + NH4(+) + 2 H2O = 6 Fe(II)-[cytochrome c] + nitrite + 8 H(+). It participates in nitrogen metabolism; nitrate reduction (assimilation). Catalyzes the reduction of nitrite to ammonia, consuming six electrons in the process. The polypeptide is Cytochrome c-552 (Aliarcobacter butzleri (strain RM4018) (Arcobacter butzleri)).